The following is a 294-amino-acid chain: Homoserine kinase (294 aa).

83–93 (RPKSGLGSSGA) provides a ligand contact to ATP.

This sequence belongs to the GHMP kinase family. Homoserine kinase subfamily.

It localises to the cytoplasm. It catalyses the reaction L-homoserine + ATP = O-phospho-L-homoserine + ADP + H(+). It participates in amino-acid biosynthesis; L-threonine biosynthesis; L-threonine from L-aspartate: step 4/5. In terms of biological role, catalyzes the ATP-dependent phosphorylation of L-homoserine to L-homoserine phosphate. The chain is Homoserine kinase from Pyrococcus abyssi (strain GE5 / Orsay).